The sequence spans 54 residues: Snake venom 5'-nucleotidase (54 aa).

Residues Asp-11 and His-13 each contribute to the Zn(2+) site. Residue Asn-46 is glycosylated (N-linked (GlcNAc...) asparagine).

Belongs to the 5'-nucleotidase family. Requires Zn(2+) as cofactor. Venom 5'-nucleotidases (or a part thereof) may be released into the venom via exosome-like vesicles. They may be attached via a GPI anchor to the membrane of these vesicles. Soluble forms of 5'-nucleotidase might be released by cleavage of the ectodomain in the exosome-like vesicles or venom gland cells. As to expression, expressed by the venom gland.

The protein localises to the membrane. It carries out the reaction a ribonucleoside 5'-phosphate + H2O = a ribonucleoside + phosphate. Functionally, hydrolyzes nucleotides into nucleosides. Snake venom 5'-nucleotidases are widely distributed among venomous snake taxa, but there is a lack of information about their biological activities. They have been shown to inhibit platelet aggregation. This effect may be due to the liberation of inhibitory AMP or adenosine by its action on ADP released upon initiation of aggregation. Venom 5'-nucleotidases are also known to synergistically act in vivo with other toxins like ADPases, phospholipases, and disintegrins to exert a more pronounced anti-coagulant effect. The protein is Snake venom 5'-nucleotidase of Gloydius blomhoffii blomhoffii (Japanese mamushi).